The sequence spans 530 residues: Proline--tRNA ligase, cytoplasmic (530 aa).

Belongs to the class-II aminoacyl-tRNA synthetase family.

Its subcellular location is the cytoplasm. The protein localises to the cytosol. The catalysed reaction is tRNA(Pro) + L-proline + ATP = L-prolyl-tRNA(Pro) + AMP + diphosphate. In terms of biological role, catalyzes the attachment of proline to tRNA(Pro) in a two-step reaction: proline is first activated by ATP to form Pro-AMP and then transferred to the acceptor end of tRNA(Pro). In Arabidopsis thaliana (Mouse-ear cress), this protein is Proline--tRNA ligase, cytoplasmic.